Reading from the N-terminus, the 441-residue chain is Maltose-6'-phosphate glucosidase (441 aa).

4–70 (FSILIAGGGS…PQIKFSYSTN (67 aa)) provides a ligand contact to NAD(+). 2 residues coordinate substrate: Arg-93 and Asn-147. Cys-169 is a Mn(2+) binding site. The Proton donor role is filled by Asp-170. His-200 contributes to the Mn(2+) binding site. Residue Tyr-264 is the Proton acceptor of the active site. Residue Arg-284 participates in substrate binding.

The protein belongs to the glycosyl hydrolase 4 family. Homotetramer. The cofactor is NAD(+). Mn(2+) serves as cofactor. Fe(2+) is required as a cofactor. It depends on Co(2+) as a cofactor. Requires Ni(2+) as cofactor.

It carries out the reaction alpha-maltose 6'-phosphate + H2O = D-glucose 6-phosphate + D-glucose. Its pathway is glycan degradation; maltose degradation. Its function is as follows. Hydrolyzes a wide variety of 6-phospho-alpha-D-glucosides including maltose-6'P, trehalose-6P and the 6'-phosphorylated derivatives of the five linkage-isomeric alpha-D-glucosyl-D-fructoses: trehalulose-6'P, turanose-6'P, maltulose-6'P, leucrose-6'P, and palatinose-6'P. However, sucrose-6P is not a substrate for MalH, and this enzyme also fails to hydrolyze beta-O-linked phosphorylated disaccharides such as cellobiose-6'P and gentobiose-6'P. This Fusobacterium mortiferum protein is Maltose-6'-phosphate glucosidase (malH).